The chain runs to 520 residues: Maturase K (520 aa).

It belongs to the intron maturase 2 family. MatK subfamily.

It is found in the plastid. The protein resides in the chloroplast. In terms of biological role, usually encoded in the trnK tRNA gene intron. Probably assists in splicing its own and other chloroplast group II introns. The sequence is that of Maturase K from Liriope muscari (Big blue lilyturf).